Consider the following 744-residue polypeptide: Adenosylcobalamin-dependent ribonucleoside-triphosphate reductase (744 aa).

Cys120 and Cys424 are oxidised to a cystine. An effector region-1 region spans residues 148-159 (SMPFSFLFDQLM). The segment at 169–318 (VNSNIKQIPK…ICNLIGKTVV (150 aa)) is effector region-2. Catalysis depends on residues Cys413 and Glu415. The segment at 570 to 631 (FHYAGYLIQR…SKNFASAGTV (62 aa)) is adenosylcobalamin-binding-1. The tract at residues 690-729 (LKQAPKEPINKKTYEERAALITDDVEEVFTKQNDDQKGLE) is adenosylcobalamin-binding-2.

It belongs to the class II ribonucleoside-triphosphate reductase family. As to quaternary structure, monomer. The cofactor is adenosylcob(III)alamin.

It carries out the reaction a 2'-deoxyribonucleoside 5'-triphosphate + [thioredoxin]-disulfide + H2O = a ribonucleoside 5'-triphosphate + [thioredoxin]-dithiol. Allosterically regulated by ATP and dNTP. In Lactobacillus acidophilus (strain ATCC 700396 / NCK56 / N2 / NCFM), this protein is Adenosylcobalamin-dependent ribonucleoside-triphosphate reductase (rtpR).